The sequence spans 269 residues: Subtilisin BL (269 aa).

Ca(2+) is bound at residue Gln-2. Positions 5–268 (PWGISRVQAP…SGLVNAEAAT (264 aa)) constitute a Peptidase S8 domain. Asp-32 serves as the catalytic Charge relay system. Asp-40 provides a ligand contact to Ca(2+). The active-site Charge relay system is His-62. Residues Leu-73, Asn-75, Ile-77, Val-79, Ala-163, Tyr-165, and Ala-168 each coordinate Ca(2+). Ser-215 (charge relay system) is an active-site residue.

It belongs to the peptidase S8 family. The cofactor is Ca(2+).

The protein resides in the secreted. It carries out the reaction Hydrolysis of proteins with broad specificity for peptide bonds, and a preference for a large uncharged residue in P1. Hydrolyzes peptide amides.. Functionally, subtilisin is an extracellular alkaline serine protease, it catalyzes the hydrolysis of proteins and peptide amides. This chain is Subtilisin BL, found in Lederbergia lenta (Bacillus lentus).